The following is an 87-amino-acid chain: MEKARKEQLIREYATHEGDTGSPEVQVALLTERINHLNEHLKEHKKDHHSRRGLLMMVGKRRGLLNYLKEHDIERYRSLIKRLGLRK.

The span at Met-1–Asp-19 shows a compositional bias: basic and acidic residues. The segment at Met-1–Ser-22 is disordered.

The protein belongs to the universal ribosomal protein uS15 family. As to quaternary structure, part of the 30S ribosomal subunit. Forms a bridge to the 50S subunit in the 70S ribosome, contacting the 23S rRNA.

Its function is as follows. One of the primary rRNA binding proteins, it binds directly to 16S rRNA where it helps nucleate assembly of the platform of the 30S subunit by binding and bridging several RNA helices of the 16S rRNA. Forms an intersubunit bridge (bridge B4) with the 23S rRNA of the 50S subunit in the ribosome. The chain is Small ribosomal subunit protein uS15 from Clostridium novyi (strain NT).